Here is a 779-residue protein sequence, read N- to C-terminus: Cysteine-rich protein 2-binding protein (779 aa).

Residues 1–34 form a disordered region; the sequence is MDSSIHLSGLLSRHDDDATRTSTSEGLEEGEVEG. Serine 4 carries the post-translational modification Phosphoserine. An N6-acetyllysine modification is found at lysine 230. 3 disordered regions span residues 247-292, 314-345, and 360-457; these read SRNP…PVKF, LSSS…HSAT, and PPQA…GPRY. Residues 255-275 show a composition bias toward basic and acidic residues; the sequence is MELKEKRSRTQEAKDIRRAQK. At serine 284 the chain carries Phosphoserine. Lysine 291 is modified (N6-acetyllysine). The segment covering 314-334 has biased composition (low complexity); it reads LSSSDRTPLTSPSPSPSLDFS. Basic and acidic residues-rich tracts occupy residues 402–423 and 443–452; these read RAPE…RMDG and KPPLEKDMKP. A Phosphoserine modification is found at serine 413. Positions 635–779 constitute an N-acetyltransferase domain; sequence LDYCYVRPNH…KHAFFLRLRR (145 aa).

Interacts with the LIM 1 domain of CSRP2. Component of the ADA2A-containing complex (ATAC), composed of CSRP2BP, KAT2A, TADA2L, TADA3L, ZZ3, MBIP, WDR5, YEATS2, CCDC101 and DR1. In the complex, it probably interacts directly with KAT2A, MBIP and WDR5.

The protein localises to the nucleus. It localises to the cytoplasm. Component of the ATAC complex, a complex with histone acetyltransferase activity on histones H3 and H4. May function as a scaffold for the ATAC complex to promote ATAC complex stability. Has also weak histone acetyltransferase activity toward histone H4. Required for the normal progression through G1 and G2/M phases of the cell cycle. In Mus musculus (Mouse), this protein is Cysteine-rich protein 2-binding protein.